The primary structure comprises 103 residues: Pro-glucagon (103 aa).

This sequence belongs to the glucagon family.

It localises to the secreted. In terms of biological role, plays a key role in glucose metabolism and homeostasis. Regulates blood glucose by increasing gluconeogenesis and decreasing glycolysis. This Aquarana catesbeiana (American bullfrog) protein is Pro-glucagon (gcg).